We begin with the raw amino-acid sequence, 499 residues long: Maturase K (499 aa).

It belongs to the intron maturase 2 family. MatK subfamily.

The protein localises to the plastid. The protein resides in the chloroplast. Usually encoded in the trnK tRNA gene intron. Probably assists in splicing its own and other chloroplast group II introns. This is Maturase K from Ceratonia siliqua (Carob).